A 251-amino-acid polypeptide reads, in one-letter code: Cyclohexanol dehydrogenase (251 aa).

The NAD(+) site is built by Asp-42, Asn-95, Tyr-161, Lys-165, Ile-194, and Thr-196. Catalysis depends on Tyr-161, which acts as the Proton acceptor.

This sequence belongs to the short-chain dehydrogenases/reductases (SDR) family.

It carries out the reaction cyclohexanol + NAD(+) = cyclohexanone + NADH + H(+). Its function is as follows. Catalyzes the oxidation of cyclohexanol to cyclohexanone. Required for the conversion of cyclohexanol to adipic acid. The polypeptide is Cyclohexanol dehydrogenase (Acinetobacter sp. (strain SE19)).